Here is a 971-residue protein sequence, read N- to C-terminus: Breast cancer type 2 susceptibility protein homolog (971 aa).

Residues 1–15 (MDQNGASGSHPNRLS) show a composition bias toward polar residues. Disordered regions lie at residues 1–30 (MDQN…ATVS), 130–155 (SRKR…LSVQ), 349–395 (KLKL…DQPN), and 420–466 (MQCS…SSHQ). Positions 130–139 (SRKRDPKSHK) are enriched in basic residues. Over residues 349 to 364 (KLKLEPSSQKEQKSSK) the composition is skewed to basic and acidic residues. Composition is skewed to polar residues over residues 375–392 (SKQS…TILD), 420–432 (MQCS…SKNA), and 453–466 (KQTP…SSHQ). BRCA2 repeat units lie at residues 570–604 (AEPE…EFQS), 671–705 (NESQ…QSKA), and 746–780 (SETE…EFQA). A disordered region spans residues 916 to 971 (MERFAPKPSSTSTPLADRDLNRSKDCTKNRQDAEDMSPICMQPKKSRRLGLSRSRY). Over residues 931–948 (ADRDLNRSKDCTKNRQDA) the composition is skewed to basic and acidic residues. The span at 959-971 (KKSRRLGLSRSRY) shows a compositional bias: basic residues.

In terms of assembly, interacts with Rad9. Interacts with spn-A/Rad51. Interacts with cyclin CycG.

It localises to the nucleus. Involved in and required for double-strand break repair by meiotic and mitotic homologous recombination. During meiosis, has a dual role in the repair of meiotic double-stranded breaks and the efficient activation of the meiotic recombination checkpoint. This Drosophila melanogaster (Fruit fly) protein is Breast cancer type 2 susceptibility protein homolog.